The sequence spans 488 residues: Zinc metalloproteinase-disintegrin 8 (488 aa).

Residues 1 to 20 (MIQVLLVTICLAVFPYQGSS) form the signal peptide. The propeptide occupies 21–191 (IILESGNVND…KASQLNLPPE (171 aa)). Residues 198 to 396 (TYIELVVVAD…STTRCLHNEP (199 aa)) form the Peptidase M12B domain. Ca(2+)-binding residues include E201 and D285. N-linked (GlcNAc...) asparagine glycosylation is present at N296. Disulfide bonds link C309-C391, C349-C373, and C351-C356. H334 is a Zn(2+) binding site. E335 is an active-site residue. Zn(2+)-binding residues include H338 and H344. Residues C391, N394, N409, E413, E416, and D419 each contribute to the Ca(2+) site. The 85-residue stretch at 404-488 (PPFCGNYFKE…ADCPRNGLYG (85 aa)) folds into the Disintegrin domain. Cystine bridges form between C407–C426, C418–C436, C420–C431, C430–C453, C444–C450, C449–C474, and C462–C481. A Cell attachment site motif is present at residues 466–468 (RGD).

It belongs to the venom metalloproteinase (M12B) family. P-II subfamily. Zn(2+) serves as cofactor. Expressed by the venom gland.

Its subcellular location is the secreted. Its function is as follows. Inhibits ADP-induced platelet aggregation (probably by binding integrin alpha-IIb/beta-3 (ITGA2B/ITGB3)) and degrades fibrinogen. In Crotalus adamanteus (Eastern diamondback rattlesnake), this protein is Zinc metalloproteinase-disintegrin 8.